The chain runs to 65 residues: Light-harvesting protein B-800-850 alpha chain C (65 aa).

Topologically, residues 1-11 (MNQGRIWTVVS) are cytoplasmic. A helical membrane pass occupies residues 12–35 (PTVGLPLLLGSVAAIAFAVHFAVL). H31 is a binding site for a bacteriochlorophyll. At 36 to 65 (ENTSWVAAFMNGKSVAAAPAPAAPAAPAKK) the chain is on the periplasmic side.

It belongs to the antenna complex alpha subunit family. The core complex is formed by different alpha and beta chains, binding bacteriochlorophyll molecules, and arranged most probably in tetrameric structures disposed around the reaction center. The non-pigmented gamma chains may constitute additional components.

It localises to the cell inner membrane. Antenna complexes are light-harvesting systems, which transfer the excitation energy to the reaction centers. This Rhodopseudomonas palustris protein is Light-harvesting protein B-800-850 alpha chain C (pucAC).